We begin with the raw amino-acid sequence, 475 residues long: Ribulose bisphosphate carboxylase large chain (475 aa).

Positions 1 to 2 are excised as a propeptide; that stretch reads MS. Proline 3 is subject to N-acetylproline. Lysine 14 carries the N6,N6,N6-trimethyllysine modification. Substrate contacts are provided by asparagine 123 and threonine 173. The Proton acceptor role is filled by lysine 175. A substrate-binding site is contributed by lysine 177. Mg(2+)-binding residues include lysine 201, aspartate 203, and glutamate 204. The residue at position 201 (lysine 201) is an N6-carboxylysine. The active-site Proton acceptor is histidine 294. Substrate contacts are provided by arginine 295, histidine 327, and serine 379.

Belongs to the RuBisCO large chain family. Type I subfamily. As to quaternary structure, heterohexadecamer of 8 large chains and 8 small chains; disulfide-linked. The disulfide link is formed within the large subunit homodimers. The cofactor is Mg(2+). In terms of processing, the disulfide bond which can form in the large chain dimeric partners within the hexadecamer appears to be associated with oxidative stress and protein turnover.

The protein resides in the plastid. Its subcellular location is the chloroplast. It carries out the reaction 2 (2R)-3-phosphoglycerate + 2 H(+) = D-ribulose 1,5-bisphosphate + CO2 + H2O. The enzyme catalyses D-ribulose 1,5-bisphosphate + O2 = 2-phosphoglycolate + (2R)-3-phosphoglycerate + 2 H(+). RuBisCO catalyzes two reactions: the carboxylation of D-ribulose 1,5-bisphosphate, the primary event in carbon dioxide fixation, as well as the oxidative fragmentation of the pentose substrate in the photorespiration process. Both reactions occur simultaneously and in competition at the same active site. This chain is Ribulose bisphosphate carboxylase large chain, found in Pinus thunbergii (Japanese black pine).